The chain runs to 66 residues: Large ribosomal subunit protein bL35 (66 aa).

A compositionally biased stretch (basic residues) spans 1–16 (MPKQKTHRASAKRFKR). The tract at residues 1–21 (MPKQKTHRASAKRFKRTGSGG) is disordered.

The protein belongs to the bacterial ribosomal protein bL35 family.

The chain is Large ribosomal subunit protein bL35 from Streptococcus sanguinis (strain SK36).